Consider the following 264-residue polypeptide: NADH dehydrogenase [ubiquinone] iron-sulfur protein 3, mitochondrial (264 aa).

Residues 1-36 (MAAAAVARLWWRGILGASALTRGTGRPSVLLLPVRR) constitute a mitochondrion transit peptide.

This sequence belongs to the complex I 30 kDa subunit family. Core subunit of respiratory chain NADH dehydrogenase (Complex I) which is composed of 45 different subunits. Interacts with NDUFAF3. Interacts with RAB5IF. Found in subcomplexes containing subunits NDUFS2, MT-ND1 and NDUFA13.

It localises to the mitochondrion inner membrane. The enzyme catalyses a ubiquinone + NADH + 5 H(+)(in) = a ubiquinol + NAD(+) + 4 H(+)(out). In terms of biological role, core subunit of the mitochondrial membrane respiratory chain NADH dehydrogenase (Complex I) which catalyzes electron transfer from NADH through the respiratory chain, using ubiquinone as an electron acceptor. Essential for the catalytic activity and assembly of complex I. The sequence is that of NADH dehydrogenase [ubiquinone] iron-sulfur protein 3, mitochondrial (NDUFS3) from Pan troglodytes (Chimpanzee).